The following is a 267-amino-acid chain: MEMO1 family protein aq_890 (267 aa).

It belongs to the MEMO1 family.

This Aquifex aeolicus (strain VF5) protein is MEMO1 family protein aq_890.